The primary structure comprises 519 residues: Chloroethene reductive dehalogenase (519 aa).

Positions 1 to 43 (MSKFHKTISRRDFMKGLGLAGAGIGAVAASAPVFHDIDELVSS) form a signal peptide, tat-type signal. 2 consecutive 4Fe-4S ferredoxin-type domains span residues 388 to 420 (PTPPIDAGMFEFCKTCYICRDVCVSGGVHQEDE) and 435 to 465 (LGYRTDWSGCHNQCGMCQSSCPFTYLGLENA). [4Fe-4S] cluster-binding residues include cysteine 400, cysteine 403, cysteine 406, cysteine 410, cysteine 444, cysteine 448, cysteine 451, and cysteine 455.

Belongs to the PceA family. Requires [4Fe-4S] cluster as cofactor. The cofactor is corrinoid. In terms of processing, predicted to be exported by the Tat system. The position of the signal peptide cleavage has been experimentally proven.

It localises to the cell membrane. It carries out the reaction chloroethene + AH2 = ethene + chloride + A + H(+). It catalyses the reaction (Z)-1,2-dichloroethene + AH2 = chloroethene + chloride + A + H(+). The catalysed reaction is 1,1-dichloroethene + AH2 = chloroethene + chloride + A + H(+). Its function is as follows. Catalyzes the reductive dechlorination of chloroethene (or vinyl chloride, VC) to ethene. Can also reduce all dichloroethene (DCE) isomers, but not tetrachloroethene (PCE) or trichloroethene (TCE), at high rates. Reduced methyl viologen can act as the artificial electron donor. The sequence is that of Chloroethene reductive dehalogenase from Dehalococcoides mccartyi (strain VS).